Here is a 296-residue protein sequence, read N- to C-terminus: Nucleotide-binding protein Pnec_1620 (296 aa).

Position 8-15 (8-15) interacts with ATP; that stretch reads GISGSGKS. Residue 57–60 participates in GTP binding; it reads DARR.

The protein belongs to the RapZ-like family.

In terms of biological role, displays ATPase and GTPase activities. The protein is Nucleotide-binding protein Pnec_1620 of Polynucleobacter necessarius subsp. necessarius (strain STIR1).